Consider the following 369-residue polypeptide: GTPase Obg (369 aa).

The region spanning 1–159 is the Obg domain; that stretch reads MKFIDEAKIE…RELRLELKVL (159 aa). The tract at residues 128–148 is disordered; the sequence is IHFKSSTNRAPRQKSEGKEGE. Residues 160–333 enclose the OBG-type G domain; it reads ADIGLLGMPN…LVTEIYDYIA (174 aa). GTP is bound by residues 166 to 173, 191 to 195, 213 to 216, 283 to 286, and 314 to 316; these read GMPNAGKS, FTTLH, DIPG, NKLD, and SAL. Positions 173 and 193 each coordinate Mg(2+).

It belongs to the TRAFAC class OBG-HflX-like GTPase superfamily. OBG GTPase family. Monomer. It depends on Mg(2+) as a cofactor.

It localises to the cytoplasm. Functionally, an essential GTPase which binds GTP, GDP and possibly (p)ppGpp with moderate affinity, with high nucleotide exchange rates and a fairly low GTP hydrolysis rate. Plays a role in control of the cell cycle, stress response, ribosome biogenesis and in those bacteria that undergo differentiation, in morphogenesis control. The chain is GTPase Obg from Herminiimonas arsenicoxydans.